A 958-amino-acid polypeptide reads, in one-letter code: MSDNQNKPGKPAAKPQSKYPVNMTDTPFPMRGDLAKREPQWVKQWQDQKVYEKIRKASKGRPKFILHDGPPYANGDIHLGHAVNKILKDMIVKTRQFDGFDAPYVPGWDCHGMPIEIQIEKQFGKNLPTAEVLSKARAYANEQVERQKKDFIRLGVLGQWDKPYKTMDFGNEADELRALGSLLEKGYVYRGLKPVNWCFDCGSALAEAEVEYQDKRDPAIDVGFPFAEPEKVAKAFGLAKLPTNKGYAIIWTTTPWTIPANQALNVHGDLPYALVNVVRNGVPQLLILAADLVGTVLQRCGLTGETIAICEGSALEGIRFKHPFADLDPGYNRESPIYLATYVAADSGTGIVHSAPAYGIEDFISCKSHGMRDDEIIAPVMGDGKYASWLPLFGGLTIWEASKPICAKLDEVGSLFKLVMFDHSYMHCWRHKTPIIYRATSQWFAGMDVMPKNQGATLRETALQAIEETEFFPSWGKARLHGMIANRPDWTLSRQRQWGVPMAFFVHKETGDLHPRTPELLEQIAQRVEKDGIEAWLTLDPKELLGADADMYLKNKDTLDVWFDSGCTHQTVLRGSHKEELAFPADLYLEGSDQHRGWFHSSLLTSSMMNGRAPYKALLTHGFTVDGEGKKMSKSLGNTLAPQKISDTLGADILRLWIASTDYSGELSISDEILKRVTESYRRIRNTVRFLLSNTSDFDAAKDLVPVADMLEIDRYAVAQMNAMQAEILAHYKVYEFHPVVSKLQMYCSEDLGGFYLDILKDRLYTSGVTSHARRSAQSAIWHLTHSLLRLMAPILSFTAEEAWAVFASPDVNTDGTIFTHTFYQLPEVSDGAALLAKYTLLREVRNDVTKQLEEVRVAGGIGSSLQAEVELKASGDKFAALASLDDDLKFVLITSQAGVSQVASAEEESVVVTPSTYQKCERCWHYRADVGSHAEHEGLCGRCVANLFGKGEARRFA.

The segment at 1 to 32 (MSDNQNKPGKPAAKPQSKYPVNMTDTPFPMRG) is disordered. The short motif at 71 to 81 (PYANGDIHLGH) is the 'HIGH' region element. Residue Glu-590 participates in L-isoleucyl-5'-AMP binding. Positions 631-635 (KMSKS) match the 'KMSKS' region motif. Residue Lys-634 coordinates ATP. Zn(2+)-binding residues include Cys-921, Cys-924, Cys-941, and Cys-944.

Belongs to the class-I aminoacyl-tRNA synthetase family. IleS type 1 subfamily. In terms of assembly, monomer. It depends on Zn(2+) as a cofactor.

It localises to the cytoplasm. The catalysed reaction is tRNA(Ile) + L-isoleucine + ATP = L-isoleucyl-tRNA(Ile) + AMP + diphosphate. Its function is as follows. Catalyzes the attachment of isoleucine to tRNA(Ile). As IleRS can inadvertently accommodate and process structurally similar amino acids such as valine, to avoid such errors it has two additional distinct tRNA(Ile)-dependent editing activities. One activity is designated as 'pretransfer' editing and involves the hydrolysis of activated Val-AMP. The other activity is designated 'posttransfer' editing and involves deacylation of mischarged Val-tRNA(Ile). The polypeptide is Isoleucine--tRNA ligase (Janthinobacterium sp. (strain Marseille) (Minibacterium massiliensis)).